The following is a 476-amino-acid chain: ATP synthase subunit beta (476 aa).

An ATP-binding site is contributed by 152 to 159; it reads GGAGVGKT.

Belongs to the ATPase alpha/beta chains family. In terms of assembly, F-type ATPases have 2 components, CF(1) - the catalytic core - and CF(0) - the membrane proton channel. CF(1) has five subunits: alpha(3), beta(3), gamma(1), delta(1), epsilon(1). CF(0) has three main subunits: a(1), b(2) and c(9-12). The alpha and beta chains form an alternating ring which encloses part of the gamma chain. CF(1) is attached to CF(0) by a central stalk formed by the gamma and epsilon chains, while a peripheral stalk is formed by the delta and b chains.

Its subcellular location is the cell inner membrane. It catalyses the reaction ATP + H2O + 4 H(+)(in) = ADP + phosphate + 5 H(+)(out). Its function is as follows. Produces ATP from ADP in the presence of a proton gradient across the membrane. The catalytic sites are hosted primarily by the beta subunits. The sequence is that of ATP synthase subunit beta from Granulibacter bethesdensis (strain ATCC BAA-1260 / CGDNIH1).